The primary structure comprises 1427 residues: Double-stranded DNA deaminase toxin A (1427 aa).

A run of 2 helical transmembrane segments spans residues 16 to 36 (ALAG…AVAF) and 43 to 63 (FGVA…LLSI). 4 YD repeats span residues 469-501 (RVVE…DGRT), 548-584 (YDDA…GPDG), 720-747 (NARG…GRLR), and 977-1008 (YDGA…ISRA). Positions 1264-1427 (IGLNGGANVY…SPKSPTKGGC (164 aa)) are C-terminal effector domain, has cytidine deaminase activity. His-1345, Cys-1373, and Cys-1376 together coordinate Zn(2+). The tract at residues 1402–1427 (KRGATGETKVFTGNSNSPKSPTKGGC) is disordered. Over residues 1412–1421 (FTGNSNSPKS) the composition is skewed to polar residues.

It belongs to the RHS/WapA nuclease family. In terms of assembly, the toxic domain forms a 1:1 complex with the DddI immunity protein.

It localises to the membrane. The enzyme catalyses a 2'-deoxycytidine in double-stranded DNA + H2O + H(+) = a 2'-deoxyuridine in double-stranded DNA + NH4(+). In terms of biological role, toxic component of a toxin-immunity protein module, which functions as a cellular contact-dependent growth inhibition (CDI) system. CDI modules allow bacteria to communicate with and inhibit the growth of closely related neighboring bacteria in a contact-dependent fashion. Bacteria that have this module inhibit or kill bacteria without it, giving them a growth advantage. Probably specifically inhibited by cognate immunity protein DddI. The C-terminal 163 residue fragment has double-stranded DNA cytidine deaminase activity; it does not deaminate ssDNA, ssRNA or dsRNA. Leads to C:G to T:A conversions in deaminated DNA. Preferentially deaminates 5'-TC-3' substrates. The chain is Double-stranded DNA deaminase toxin A from Burkholderia cenocepacia (strain H111).